Consider the following 127-residue polypeptide: Holo-[acyl-carrier-protein] synthase (127 aa).

Positions 9 and 58 each coordinate Mg(2+).

The protein belongs to the P-Pant transferase superfamily. AcpS family. Mg(2+) is required as a cofactor.

It is found in the cytoplasm. The enzyme catalyses apo-[ACP] + CoA = holo-[ACP] + adenosine 3',5'-bisphosphate + H(+). Its function is as follows. Transfers the 4'-phosphopantetheine moiety from coenzyme A to a Ser of acyl-carrier-protein. This is Holo-[acyl-carrier-protein] synthase from Shewanella putrefaciens (strain CN-32 / ATCC BAA-453).